Reading from the N-terminus, the 607-residue chain is Phosphatidylinositol 4-kinase LSB6 (607 aa).

Over residues 73-88 the composition is skewed to polar residues; the sequence is NVPSESPRPDQTSGSN. Positions 73–93 are disordered; it reads NVPSESPRPDQTSGSNPAVGL. One can recognise a PI3K/PI4K catalytic domain in the interval 161–522; sequence GRELERIQTG…LVRRTRCQVI (362 aa). The segment at 167–173 is G-loop; the sequence is IQTGSSG. The segment at 318-356 is disordered; that stretch reads KSSGEDINHKPETTRNLTDETEPSKQINSSPISTESEEN. Basic and acidic residues predominate over residues 319–330; sequence SSGEDINHKPET. Residues 341 to 351 show a composition bias toward polar residues; the sequence is SKQINSSPIST. Positions 384–392 are catalytic loop; sequence RNTDRGLDN. The activation loop stretch occupies residues 411–431; that stretch reads AIDNGLSFPWKHPDEWRLYPY.

Belongs to the PI3/PI4-kinase family. As to quaternary structure, interacts with LAS17. Mg(2+) serves as cofactor. The cofactor is Mn(2+).

The protein localises to the cell membrane. It is found in the vacuole membrane. The enzyme catalyses a 1,2-diacyl-sn-glycero-3-phospho-(1D-myo-inositol) + ATP = a 1,2-diacyl-sn-glycero-3-phospho-(1D-myo-inositol 4-phosphate) + ADP + H(+). Its function is as follows. May play a role in endocytic and/or exocytic pathways. In Saccharomyces cerevisiae (strain ATCC 204508 / S288c) (Baker's yeast), this protein is Phosphatidylinositol 4-kinase LSB6 (LSB6).